We begin with the raw amino-acid sequence, 370 residues long: Tyrosine-protein kinase transforming protein SEA (370 aa).

The region spanning 60–323 (THRSRVIGRG…GLVCELERVL (264 aa)) is the Protein kinase domain. ATP contacts are provided by residues 66–74 (IGRGHFGSV) and K92. D186 (proton acceptor) is an active-site residue. Y216 is modified (phosphotyrosine; by autocatalysis). The interval 345-370 (PPFPPAPRGQLPDSEDEEDEEEEVAE) is disordered. Over residues 357-370 (DSEDEEDEEEEVAE) the composition is skewed to acidic residues.

It belongs to the protein kinase superfamily. Tyr protein kinase family.

It catalyses the reaction L-tyrosyl-[protein] + ATP = O-phospho-L-tyrosyl-[protein] + ADP + H(+). This Galliformes protein is Tyrosine-protein kinase transforming protein SEA (V-SEA).